Consider the following 631-residue polypeptide: Leucine aminopeptidase 2-2 (631 aa).

Residues 140–142 and 265–270 each bind substrate; these read QCQ and PYGGME. H294 is a binding site for Zn(2+). Catalysis depends on E295, which acts as the Proton acceptor. Residues H298 and E317 each coordinate Zn(2+). Y395 functions as the Proton donor in the catalytic mechanism.

It belongs to the peptidase M1 family. Zn(2+) is required as a cofactor.

Its subcellular location is the cytoplasm. It is found in the nucleus. The catalysed reaction is an epoxide + H2O = an ethanediol. Its function is as follows. Aminopeptidase that preferentially cleaves di- and tripeptides. Also has low epoxide hydrolase activity (in vitro). Can hydrolyze the epoxide leukotriene LTA(4) but it forms preferentially 5,6-dihydroxy-7,9,11,14-eicosatetraenoic acid rather than the cytokine leukotriene B(4) as the product compared to the homologous mammalian enzyme (in vitro). The polypeptide is Leucine aminopeptidase 2-2 (Meyerozyma guilliermondii (strain ATCC 6260 / CBS 566 / DSM 6381 / JCM 1539 / NBRC 10279 / NRRL Y-324) (Yeast)).